The following is an 851-amino-acid chain: ATP-dependent DNA helicase DDX31 (851 aa).

The interval 1-196 is disordered; the sequence is MAPDLASQRH…STSDRNQEER (196 aa). The short motif at 230-259 is the Q motif element; sequence AAFHELGLHPHLISTINTVLKMSSMTSVQK. Residues 262 to 443 form the Helicase ATP-binding domain; it reads IPVLLEGRDA…DISLHDPVSI (182 aa). 275-282 provides a ligand contact to ATP; sequence SQTGSGKT. Residues 388–391 carry the DEAD box motif; sequence DEAD. Residues 480–659 enclose the Helicase C-terminal domain; the sequence is SLKQHVTVVP…VSEIKMEDIL (180 aa). Disordered stretches follow at residues 762–784 and 804–851; these read KKRK…HSLA and KQNA…SQKV. Omega-N-methylarginine is present on arginine 828. Residues 841–851 show a composition bias toward basic and acidic residues; that stretch reads VQRDSKTSQKV.

Belongs to the DEAD box helicase family. DDX31/DBP7 subfamily. As to quaternary structure, interacts with NPM1; this interaction prevents interaction between NPM1 and HDM2. Weakly or undetectably expressed in normal organs. Up-regulated in renal cell carcinoma.

The protein localises to the nucleus. It is found in the nucleolus. The catalysed reaction is ATP + H2O = ADP + phosphate + H(+). Its function is as follows. May have DNA helicase activity and RNA helicase activity. Probably have ssDNA and RNA dependent ATPase activity. Plays a role in ribosome biogenesis and TP53/p53 regulation through its interaction with NPM1. The protein is ATP-dependent DNA helicase DDX31 of Homo sapiens (Human).